A 493-amino-acid polypeptide reads, in one-letter code: Anthranilate synthase component 1 (493 aa).

Residues serine 48 and 273 to 275 each bind L-tryptophan; that span reads PYM. A chorismate-binding site is contributed by 308-309; the sequence is GT. Residue glutamate 335 coordinates Mg(2+). Chorismate contacts are provided by residues tyrosine 423, arginine 443, 457 to 459, and glycine 459; that span reads GGG. Glutamate 472 serves as a coordination point for Mg(2+).

Belongs to the anthranilate synthase component I family. As to quaternary structure, heterotetramer consisting of two non-identical subunits: a beta subunit (TrpG) and a large alpha subunit (TrpE). The cofactor is Mg(2+).

It catalyses the reaction chorismate + L-glutamine = anthranilate + pyruvate + L-glutamate + H(+). It functions in the pathway amino-acid biosynthesis; L-tryptophan biosynthesis; L-tryptophan from chorismate: step 1/5. Its activity is regulated as follows. Feedback inhibited by tryptophan. Functionally, part of a heterotetrameric complex that catalyzes the two-step biosynthesis of anthranilate, an intermediate in the biosynthesis of L-tryptophan. In the first step, the glutamine-binding beta subunit (TrpG) of anthranilate synthase (AS) provides the glutamine amidotransferase activity which generates ammonia as a substrate that, along with chorismate, is used in the second step, catalyzed by the large alpha subunit of AS (TrpE) to produce anthranilate. In the absence of TrpG, TrpE can synthesize anthranilate directly from chorismate and high concentrations of ammonia. The polypeptide is Anthranilate synthase component 1 (trpE) (Pseudomonas putida (Arthrobacter siderocapsulatus)).